We begin with the raw amino-acid sequence, 1295 residues long: DNA-directed RNA polymerase subunit beta' (1295 aa).

Cysteine 60, cysteine 62, cysteine 75, and cysteine 78 together coordinate Zn(2+). Aspartate 516, aspartate 518, and aspartate 520 together coordinate Mg(2+). Zn(2+)-binding residues include cysteine 841, cysteine 914, cysteine 921, and cysteine 924.

Belongs to the RNA polymerase beta' chain family. In terms of assembly, the RNAP catalytic core consists of 2 alpha, 1 beta, 1 beta' and 1 omega subunit. When a sigma factor is associated with the core the holoenzyme is formed, which can initiate transcription. The cofactor is Mg(2+). It depends on Zn(2+) as a cofactor.

The catalysed reaction is RNA(n) + a ribonucleoside 5'-triphosphate = RNA(n+1) + diphosphate. Functionally, DNA-dependent RNA polymerase catalyzes the transcription of DNA into RNA using the four ribonucleoside triphosphates as substrates. This Dehalococcoides mccartyi (strain ATCC BAA-2266 / KCTC 15142 / 195) (Dehalococcoides ethenogenes (strain 195)) protein is DNA-directed RNA polymerase subunit beta'.